Consider the following 232-residue polypeptide: uncharacterized protein (232 aa).

This is an uncharacterized protein from Homo sapiens (Human).